The primary structure comprises 129 residues: Profilin-4 (129 aa).

This sequence belongs to the profilin family. Expressed in testis, in seminiferous tubules (at protein level). Expressed in spermatocytes and spermatids, but not in spermatogonium.

It is found in the cytoplasm. In terms of biological role, involved in male fertility. Required for manchette development and acrosome biogenesis during spermiogenesis. Binds in vitro to phospholipids, including phosphatidylinositol 3-phosphate (PtdIns(3)P), phosphatidylinositol 4,5-bisphosphate (PtdIns(4,5)P2), phosphatidylinositol 4-phosphate (PtdIns(4)P) and phosphatidic acid (PA). Contrary to other profilin family members, does not bind to actin in vitro. In Rattus norvegicus (Rat), this protein is Profilin-4 (Pfn4).